The primary structure comprises 281 residues: MTESPLSAPAPTSNQSPAPEQTFGTAGIAPMDRPSAMTRFFMSIVAWAESLNLKYAKLGNPPVYDTATFPWAAEIEKDYPAIRAELEKVLLRQSELPTFQDISTDVKTISTDTRWKTFFLLGFGVKSEQNIKACPNTWAAVQKIPGLTTAMFSIFEPGKHLPAHRGPYNGVLRLHLGLIVPEPNDKLAIRVDNQVCHWQEGKALIFDDAYEHEAWNHTDKTRVVLFVDFVKPLKSPARFVNWALMNLAIFTPFIKEGLDNHKEWEKKFYAEAEAFRNRPKP.

Polar residues predominate over residues 1–24 (MTESPLSAPAPTSNQSPAPEQTFG). A disordered region spans residues 1 to 29 (MTESPLSAPAPTSNQSPAPEQTFGTAGIA).

It belongs to the aspartyl/asparaginyl beta-hydroxylase family.

The catalysed reaction is an N(2)-[(3R)-3-(2-saturated-acyloxy)acyl]-L-ornithine lipid + 2-oxoglutarate + O2 = a 2-hydroxyornithine lipid + succinate + CO2. It functions in the pathway lipid metabolism. Functionally, involved in the biosynthesis of ornithine lipids (OLs), which are phosphorus-free membrane lipids. Catalyzes the hydroxylation at the 2 position of the secondary fatty acid of OL. Contributes to symbiotic performance and acid tolerance. This is Ornithine lipid ester-linked acyl 2-hydroxylase from Rhizobium tropici.